The primary structure comprises 487 residues: Siroheme synthase (487 aa).

Residues 1 to 203 are precorrin-2 dehydrogenase /sirohydrochlorin ferrochelatase; sequence MNTFPLFFKL…GRSVEAEQAL (203 aa). NAD(+) contacts are provided by residues 22-23 and 43-44; these read EV and PQ. Position 128 is a phosphoserine (Ser-128). A uroporphyrinogen-III C-methyltransferase region spans residues 229–487; it reads GEVYIVGAGP…DQQAHALNML (259 aa). Pro-238 provides a ligand contact to S-adenosyl-L-methionine. Asp-261 functions as the Proton acceptor in the catalytic mechanism. The active-site Proton donor is Lys-283. S-adenosyl-L-methionine-binding positions include 314–316, Val-319, 344–345, Met-396, and Ala-425; these read GGD and TA.

It in the N-terminal section; belongs to the precorrin-2 dehydrogenase / sirohydrochlorin ferrochelatase family. In the C-terminal section; belongs to the precorrin methyltransferase family.

It catalyses the reaction uroporphyrinogen III + 2 S-adenosyl-L-methionine = precorrin-2 + 2 S-adenosyl-L-homocysteine + H(+). It carries out the reaction precorrin-2 + NAD(+) = sirohydrochlorin + NADH + 2 H(+). The catalysed reaction is siroheme + 2 H(+) = sirohydrochlorin + Fe(2+). The protein operates within cofactor biosynthesis; adenosylcobalamin biosynthesis; precorrin-2 from uroporphyrinogen III: step 1/1. Its pathway is cofactor biosynthesis; adenosylcobalamin biosynthesis; sirohydrochlorin from precorrin-2: step 1/1. It participates in porphyrin-containing compound metabolism; siroheme biosynthesis; precorrin-2 from uroporphyrinogen III: step 1/1. It functions in the pathway porphyrin-containing compound metabolism; siroheme biosynthesis; siroheme from sirohydrochlorin: step 1/1. The protein operates within porphyrin-containing compound metabolism; siroheme biosynthesis; sirohydrochlorin from precorrin-2: step 1/1. Its function is as follows. Multifunctional enzyme that catalyzes the SAM-dependent methylations of uroporphyrinogen III at position C-2 and C-7 to form precorrin-2 via precorrin-1. Then it catalyzes the NAD-dependent ring dehydrogenation of precorrin-2 to yield sirohydrochlorin. Finally, it catalyzes the ferrochelation of sirohydrochlorin to yield siroheme. The chain is Siroheme synthase from Psychrobacter sp. (strain PRwf-1).